An 866-amino-acid polypeptide reads, in one-letter code: Scm-like with four MBT domains protein 1 (866 aa).

4 MBT repeats span residues 20 to 120 (LSWE…LEAP), 128 to 232 (SDWD…LQPP), 242 to 348 (AEWQ…ISPP), and 356 to 453 (FDWA…LSTP). The segment at 34–42 (VPYGSFKHV) is antigenic epitope. The tract at residues 641-777 (KKKNKRIGRP…DDENKPPSPK (137 aa)) is disordered. Over residues 663–682 (KASKRRKRRKNVFVHKKKRS) the composition is skewed to basic residues. The segment covering 683–694 (SASVDNTPAGSP) has biased composition (polar residues). Acidic residues-rich tracts occupy residues 699-713 (GEDE…DDSL) and 721-730 (QQDELQEESE). A compositionally biased stretch (low complexity) spans 737–749 (CSSSPTQSEISTS). Phosphoserine occurs at positions 767 and 775. Residues 796–864 (WSVADVVRFI…RIKFAFYEQF (69 aa)) form the SAM domain.

Interacts with MYOD1. Component of the SLC (SFMBT1-LSD1-CoREST) corepressor complex, which also contains KDM1A/LSD1 and RCOR1/CoREST. Interacts with KDM1A/LSD1 and RCOR1/CoREST. Interacts with L3MBTL3. As to expression, expressed in all cell lines and normal tissues tested, including the thymus.

It localises to the nucleus. Its function is as follows. Histone-binding protein, which is part of various corepressor complexes. Mediates the recruitment of corepressor complexes to target genes, followed by chromatin compaction and repression of transcription. Plays a role during myogenesis: required for the maintenance of undifferentiated states of myogenic progenitor cells via interaction with MYOD1. Interaction with MYOD1 leads to the recruitment of associated corepressors and silencing of MYOD1 target genes. Part of the SLC complex in germ cells, where it may play a role during spermatogenesis. The protein is Scm-like with four MBT domains protein 1 (SFMBT1) of Homo sapiens (Human).